Reading from the N-terminus, the 263-residue chain is 3'-5' ssDNA/RNA exonuclease TatD (263 aa).

Residues Glu-91, His-127, and His-152 each coordinate a divalent metal cation.

Belongs to the metallo-dependent hydrolases superfamily. TatD-type hydrolase family. TatD subfamily. As to quaternary structure, monomer. The cofactor is Mg(2+).

The protein resides in the cytoplasm. Its function is as follows. 3'-5' exonuclease that prefers single-stranded DNA and RNA. May play a role in the H(2)O(2)-induced DNA damage repair. The polypeptide is 3'-5' ssDNA/RNA exonuclease TatD (Cronobacter turicensis (strain DSM 18703 / CCUG 55852 / LMG 23827 / z3032)).